The chain runs to 157 residues: 2-C-methyl-D-erythritol 2,4-cyclodiphosphate synthase (157 aa).

The a divalent metal cation site is built by aspartate 8, histidine 10, and histidine 42. Aspartate 8–histidine 10 provides a ligand contact to 4-CDP-2-C-methyl-D-erythritol 2-phosphate. 4-CDP-2-C-methyl-D-erythritol 2-phosphate is bound by residues aspartate 56–glycine 58, serine 132–glutamate 135, phenylalanine 139, and arginine 142.

It belongs to the IspF family. Homotrimer. A divalent metal cation is required as a cofactor.

It carries out the reaction 4-CDP-2-C-methyl-D-erythritol 2-phosphate = 2-C-methyl-D-erythritol 2,4-cyclic diphosphate + CMP. The protein operates within isoprenoid biosynthesis; isopentenyl diphosphate biosynthesis via DXP pathway; isopentenyl diphosphate from 1-deoxy-D-xylulose 5-phosphate: step 4/6. Involved in the biosynthesis of isopentenyl diphosphate (IPP) and dimethylallyl diphosphate (DMAPP), two major building blocks of isoprenoid compounds. Catalyzes the conversion of 4-diphosphocytidyl-2-C-methyl-D-erythritol 2-phosphate (CDP-ME2P) to 2-C-methyl-D-erythritol 2,4-cyclodiphosphate (ME-CPP) with a corresponding release of cytidine 5-monophosphate (CMP). This Dehalococcoides mccartyi (strain CBDB1) protein is 2-C-methyl-D-erythritol 2,4-cyclodiphosphate synthase.